The sequence spans 176 residues: NAD(P)H-quinone oxidoreductase subunit 6, chloroplastic (176 aa).

5 helical membrane passes run F10–P30, P32–L52, A61–M81, L92–I112, and F152–T172.

The protein belongs to the complex I subunit 6 family. NDH is composed of at least 16 different subunits, 5 of which are encoded in the nucleus.

The protein localises to the plastid. The protein resides in the chloroplast thylakoid membrane. It catalyses the reaction a plastoquinone + NADH + (n+1) H(+)(in) = a plastoquinol + NAD(+) + n H(+)(out). It carries out the reaction a plastoquinone + NADPH + (n+1) H(+)(in) = a plastoquinol + NADP(+) + n H(+)(out). In terms of biological role, NDH shuttles electrons from NAD(P)H:plastoquinone, via FMN and iron-sulfur (Fe-S) centers, to quinones in the photosynthetic chain and possibly in a chloroplast respiratory chain. The immediate electron acceptor for the enzyme in this species is believed to be plastoquinone. Couples the redox reaction to proton translocation, and thus conserves the redox energy in a proton gradient. In Daucus carota (Wild carrot), this protein is NAD(P)H-quinone oxidoreductase subunit 6, chloroplastic (ndhG).